A 258-amino-acid chain; its full sequence is Peptidase inhibitor 15 (258 aa).

The N-terminal stretch at 1-19 is a signal peptide; that stretch reads MIAISAVSSALLFSLLCEA. A propeptide spanning residues 20-60 is cleaved from the precursor; the sequence is STVVLLNSTDSSPPTNNFTDIEAALKAQLDSADIPKARRKR. 3 N-linked (GlcNAc...) asparagine glycosylation sites follow: Asn26, Asn36, and Asn124. The 141-residue stretch at 71-211 folds into the SCP domain; the sequence is LDYHNQVRGK…RRAVYLVCNY (141 aa).

Belongs to the CRISP family. Post-translationally, N-glycosylated. As to expression, weakly expressed. Expressed at low level in prostate, mammary gland, salivary gland and thyroid gland.

Its subcellular location is the secreted. Its function is as follows. Serine protease inhibitor which displays weak inhibitory activity against trypsin. May play a role in facial patterning during embryonic development. The sequence is that of Peptidase inhibitor 15 (PI15) from Homo sapiens (Human).